A 326-amino-acid polypeptide reads, in one-letter code: Putative ribose-phosphate pyrophosphokinase 2 (326 aa).

ATP contacts are provided by residues 43–45 and 102–103; these read DGE and RQ. His-136 is a binding site for Mg(2+). D-ribose 5-phosphate is bound by residues Asp-225 and 229-233; that span reads NTGKT.

The protein belongs to the ribose-phosphate pyrophosphokinase family. Class I subfamily. In terms of assembly, homohexamer. Mg(2+) is required as a cofactor.

Its subcellular location is the cytoplasm. The catalysed reaction is D-ribose 5-phosphate + ATP = 5-phospho-alpha-D-ribose 1-diphosphate + AMP + H(+). It functions in the pathway metabolic intermediate biosynthesis; 5-phospho-alpha-D-ribose 1-diphosphate biosynthesis; 5-phospho-alpha-D-ribose 1-diphosphate from D-ribose 5-phosphate (route I): step 1/1. Its function is as follows. Involved in the biosynthesis of the central metabolite phospho-alpha-D-ribosyl-1-pyrophosphate (PRPP) via the transfer of pyrophosphoryl group from ATP to 1-hydroxyl of ribose-5-phosphate (Rib-5-P). This is Putative ribose-phosphate pyrophosphokinase 2 from Streptococcus pyogenes serotype M18 (strain MGAS8232).